A 339-amino-acid chain; its full sequence is 7,8-didemethyl-8-hydroxy-5-deazariboflavin synthase (339 aa).

Residues 25-256 (ATYSPAYTIV…PDITIQIPPN (232 aa)) enclose the Radical SAM core domain. [4Fe-4S] cluster contacts are provided by cysteine 39, cysteine 43, and cysteine 46.

This sequence belongs to the radical SAM superfamily. CofG family. As to quaternary structure, consists of two subunits, CofG and CofH. [4Fe-4S] cluster serves as cofactor.

The enzyme catalyses 5-amino-5-(4-hydroxybenzyl)-6-(D-ribitylimino)-5,6-dihydrouracil + S-adenosyl-L-methionine = 7,8-didemethyl-8-hydroxy-5-deazariboflavin + 5'-deoxyadenosine + L-methionine + NH4(+) + H(+). It functions in the pathway cofactor biosynthesis; coenzyme F0 biosynthesis. Catalyzes the radical-mediated synthesis of 7,8-didemethyl-8-hydroxy-5-deazariboflavin from 5-amino-5-(4-hydroxybenzyl)-6-(D-ribitylimino)-5,6-dihydrouracil. This Nostoc sp. (strain PCC 7120 / SAG 25.82 / UTEX 2576) protein is 7,8-didemethyl-8-hydroxy-5-deazariboflavin synthase.